The primary structure comprises 188 residues: ATP synthase subunit b (188 aa).

The helical transmembrane segment at 19–39 (VYVLGATIVSFLVLFLFITYF) threads the bilayer.

It belongs to the ATPase B chain family. F-type ATPases have 2 components, F(1) - the catalytic core - and F(0) - the membrane proton channel. F(1) has five subunits: alpha(3), beta(3), gamma(1), delta(1), epsilon(1). F(0) has three main subunits: a(1), b(2) and c(10-14). The alpha and beta chains form an alternating ring which encloses part of the gamma chain. F(1) is attached to F(0) by a central stalk formed by the gamma and epsilon chains, while a peripheral stalk is formed by the delta and b chains.

It is found in the cell membrane. Functionally, f(1)F(0) ATP synthase produces ATP from ADP in the presence of a proton or sodium gradient. F-type ATPases consist of two structural domains, F(1) containing the extramembraneous catalytic core and F(0) containing the membrane proton channel, linked together by a central stalk and a peripheral stalk. During catalysis, ATP synthesis in the catalytic domain of F(1) is coupled via a rotary mechanism of the central stalk subunits to proton translocation. Its function is as follows. Component of the F(0) channel, it forms part of the peripheral stalk, linking F(1) to F(0). This Mesomycoplasma hyopneumoniae (strain 7448) (Mycoplasma hyopneumoniae) protein is ATP synthase subunit b.